Here is a 232-residue protein sequence, read N- to C-terminus: Glycerol-3-phosphate acyltransferase (232 aa).

Transmembrane regions (helical) follow at residues 4 to 24, 56 to 76, 90 to 110, 124 to 144, 147 to 167, and 191 to 211; these read FLAI…IIAG, AVTL…VAFF, IALN…TVFA, MLIG…ILAI, TRYV…IIAI, and SLDY…IYTH.

The protein belongs to the PlsY family. Probably interacts with PlsX.

The protein localises to the cell inner membrane. The enzyme catalyses an acyl phosphate + sn-glycerol 3-phosphate = a 1-acyl-sn-glycero-3-phosphate + phosphate. It functions in the pathway lipid metabolism; phospholipid metabolism. In terms of biological role, catalyzes the transfer of an acyl group from acyl-phosphate (acyl-PO(4)) to glycerol-3-phosphate (G3P) to form lysophosphatidic acid (LPA). This enzyme utilizes acyl-phosphate as fatty acyl donor, but not acyl-CoA or acyl-ACP. The chain is Glycerol-3-phosphate acyltransferase from Chlorobaculum parvum (strain DSM 263 / NCIMB 8327) (Chlorobium vibrioforme subsp. thiosulfatophilum).